Reading from the N-terminus, the 647-residue chain is Exoribonuclease 2 (647 aa).

The RNB domain occupies arginine 192–serine 520. Residues glutamate 565–isoleucine 647 form the S1 motif domain.

This sequence belongs to the RNR ribonuclease family. RNase II subfamily.

The protein localises to the cytoplasm. The catalysed reaction is Exonucleolytic cleavage in the 3'- to 5'-direction to yield nucleoside 5'-phosphates.. Its function is as follows. Involved in mRNA degradation. Hydrolyzes single-stranded polyribonucleotides processively in the 3' to 5' direction. This is Exoribonuclease 2 from Proteus mirabilis (strain HI4320).